Reading from the N-terminus, the 197-residue chain is Phosphoheptose isomerase (197 aa).

Positions 36–197 (LFAALANNGR…IDALLLGDTE (162 aa)) constitute an SIS domain. Residue 51 to 53 (NGG) coordinates substrate. Residues His-60 and Glu-64 each coordinate Zn(2+). Substrate contacts are provided by residues Glu-64, 93–94 (ND), 119–121 (STS), Ser-124, and Gln-174. Zn(2+)-binding residues include Gln-174 and His-182.

This sequence belongs to the SIS family. GmhA subfamily. In terms of assembly, homotetramer. It depends on Zn(2+) as a cofactor.

The protein localises to the cytoplasm. The catalysed reaction is 2 D-sedoheptulose 7-phosphate = D-glycero-alpha-D-manno-heptose 7-phosphate + D-glycero-beta-D-manno-heptose 7-phosphate. It participates in carbohydrate biosynthesis; D-glycero-D-manno-heptose 7-phosphate biosynthesis; D-glycero-alpha-D-manno-heptose 7-phosphate and D-glycero-beta-D-manno-heptose 7-phosphate from sedoheptulose 7-phosphate: step 1/1. Its function is as follows. Catalyzes the isomerization of sedoheptulose 7-phosphate in D-glycero-D-manno-heptose 7-phosphate. The protein is Phosphoheptose isomerase of Bordetella avium (strain 197N).